Consider the following 280-residue polypeptide: ESX-1 secretion-associated protein EspJ (280 aa).

At serine 70 the chain carries Phosphoserine. Low complexity-rich tracts occupy residues 167-181 (QTIS…QSAQ) and 246-280 (PAQA…TTTL). The segment at 167–280 (QTISQTAQQA…TPAPSTTTTL (114 aa)) is disordered.

In terms of assembly, residues 76-280 interact with EsxB and an artificial EsxB-EsxA heterodimer. Post-translationally, phosphorylated at Ser-70.

Its subcellular location is the secreted. In terms of biological role, could be involved in regulation of growth and intracellular survival. The sequence is that of ESX-1 secretion-associated protein EspJ from Mycobacterium tuberculosis (strain ATCC 25618 / H37Rv).